The primary structure comprises 188 residues: dCTP deaminase (188 aa).

Residue lysine 107 to arginine 112 coordinates dCTP. The active-site Proton donor/acceptor is glutamate 133. Positions 152, 166, and 176 each coordinate dCTP.

Belongs to the dCTP deaminase family. In terms of assembly, homotrimer.

It catalyses the reaction dCTP + H2O + H(+) = dUTP + NH4(+). It functions in the pathway pyrimidine metabolism; dUMP biosynthesis; dUMP from dCTP (dUTP route): step 1/2. In terms of biological role, catalyzes the deamination of dCTP to dUTP. The chain is dCTP deaminase from Sulfurovum sp. (strain NBC37-1).